We begin with the raw amino-acid sequence, 173 residues long: Protein sym1 (173 aa).

The next 4 helical transmembrane spans lie at 12 to 32 (QPIL…DVLA), 52 to 72 (MALY…GFLQ), 129 to 149 (ANLT…PLEY), and 151 to 171 (VLVV…INSG).

The protein belongs to the peroxisomal membrane protein PXMP2/4 family.

The protein resides in the mitochondrion inner membrane. In terms of biological role, may be involved in cellular response to stress. Required to maintain mitochondrial DNA (mtDNA) integrity and stability. The protein is Protein sym1 (sym1) of Aspergillus oryzae (strain ATCC 42149 / RIB 40) (Yellow koji mold).